The chain runs to 93 residues: UPF0298 protein GWCH70_0997 (93 aa).

It belongs to the UPF0298 family.

The protein localises to the cytoplasm. The protein is UPF0298 protein GWCH70_0997 of Geobacillus sp. (strain WCH70).